A 303-amino-acid chain; its full sequence is Short chain dehydrogenase pigC (303 aa).

Positions 45, 103, 130, 164, 196, 200, and 231 each coordinate NADP(+). The active-site Proton donor is Y196. K200 (lowers pKa of active site Tyr) is an active-site residue.

The protein belongs to the short-chain dehydrogenases/reductases (SDR) family.

The protein operates within secondary metabolite biosynthesis. Its function is as follows. Short chain dehydrogenase; part of the gene cluster that mediates the biosynthesis of azaphilone pigments (MonAzPs), a complex mixture of compounds with a common azaphilone skeleton very widely used as food colorants. Within the pathway, pigC intercepts the very reactive benzaldehyde produced by the nrPKS pigA to reduce the omega-1 carbonyl to the alcohol to provide the first stable enzyme-free MonAzPs intermediate, 6-(4-hydroxy-2-oxopentyl)-3-methyl-2,4-dioxocyclohexane carbaldehyde, also known as M7PKS-1. The first step of the pathway is performed by the nrPKS pigA that forms the hexaketide precursor from successive condensations of five malonyl-CoA units, with a simple acetyl-CoA starter unit. The role of esterase pigG is not clear, but it may play at most a supplementary role in the formation of the benzaldehyde produced by the pigA nrPKS. This very reactive benzaldehyde is intercepted by the pigC ketoreductase that to provide the first stable enzyme-free MonAzPs intermediate, M7PKS-1. The FAD-dependent monooxygenase pigN hydroxylates M7PKS-1 at C-4, which triggers the formation of the pyran ring. PigJ, pigK and pigD are involved in the acetylation of the pyran ring. PigJ and pigK form the two subunits of a dedicated fungal FAS that produces the side chain fatty acyl moiety of MonAzPs and pigD transfers the fatty acyl chain to the C-4 alcohol. PigM and pigO are involved in the elimination of the omega-1 alcohol. PigM acts as an O-acetyltransferase that synthesizes the putative O-11 acetyl intermediate whereas pigO eliminates acetic acid to yield an intermediate with a C10(11) double bond. The dehydration of the C-11 alcohol followed by the reduction of the C6(7) double bond by the NAD(P)H-dependent oxidoreductase pigE increases the electrophilicity of the C-5 ketone of the resulting acyl benzopyran. This in turn sets up the C-5 ketone for an intramolecular Knoevenagel aldol condensation with the C-20 enol of the side chain. This condensation affords the characteristic linear tricyclic carbon skeletons of the yellow pigments that serve as the common precursors for the classical yellow pigments monascin and ankaflavin, orange pigments rubopunctatin and monascorubrin, and red pigments ribropunctamine and monascorubramine. The FAD-dependent oxidoreductase pigF is especially invoved in the biosynthesis of orange and red pigments via desaturation of C6(7). The sequence is that of Short chain dehydrogenase pigC from Monascus ruber (Mold).